The primary structure comprises 35 residues: uncharacterized protein (35 aa).

This is an uncharacterized protein from Escherichia coli (Bacteriophage T3).